The sequence spans 583 residues: uncharacterized protein (583 aa).

I24–M140 is an a nucleoside 3',5'-cyclic phosphate binding site. One can recognise a PNPLA domain in the interval L309–C469. A GXGXXG motif is present at residues G313–G318. The GXSXG motif lies at G340–G344. S342 (nucleophile) is an active-site residue. The active-site Proton acceptor is the D456. Residues D456 to G458 carry the DGA/G motif.

It belongs to the NTE family.

This is an uncharacterized protein from Mycobacterium tuberculosis (strain CDC 1551 / Oshkosh).